Here is a 411-residue protein sequence, read N- to C-terminus: Serine/threonine-protein kinase 54 (411 aa).

Phosphoserine; by PHOT1 is present on residues serine 43 and serine 45. One can recognise a Protein kinase domain in the interval 108 to 385; sequence LIIKSVIARG…EEVVAMLEAI (278 aa). Residues 114–122 and lysine 135 contribute to the ATP site; that span reads IARGTFGTV. Aspartate 253 serves as the catalytic Proton acceptor. Residue threonine 286 is modified to Phosphothreonine.

It belongs to the protein kinase superfamily. Ser/Thr protein kinase family. As to quaternary structure, binds to CBC2. Associates with PHOT2, BLUS1 and PM H(+)-ATPase (e.g. AHA1). In terms of processing, autophosphorylated. Phosphorylated in guard cells by HT1 in response to low CO(2) concentrations and by PHOT1 after blue light (BL) exposure. In terms of tissue distribution, expressed in guard cells.

It localises to the cytoplasm. The protein localises to the cytosol. It catalyses the reaction L-seryl-[protein] + ATP = O-phospho-L-seryl-[protein] + ADP + H(+). The catalysed reaction is L-threonyl-[protein] + ATP = O-phospho-L-threonyl-[protein] + ADP + H(+). Functionally, serine/threonine protein kinase that phosphorylates proteins on serine and threonine residues. Collectively with CBC2, acts as a negative regulator of stomatal opening, probably via the inhibition of plasma membrane-type ATPases (AHA1 and AHA2) activity in guard cells, but in an abscisic acid (ABA)-independent manner. However, at low concentrations of CO(2), together with CBC2, stimulates stomatal opening via the inhibition of S-type anion channels in response to blue light (BL) and red light (RL), thus being a key component to maximize photosynthesis in the light under low CO(2) conditions. Required for temperature decrease in leaves. Downstream target of HIGH LEAF TEMPERATURE1 (HT1) during low CO(2)-induced stomatal opening. Also functions in the signaling pathways of phototropins. This is Serine/threonine-protein kinase 54 from Arabidopsis thaliana (Mouse-ear cress).